A 207-amino-acid polypeptide reads, in one-letter code: Frataxin, mitochondrial (207 aa).

A mitochondrion-targeting transit peptide spans M1–G40.

Belongs to the frataxin family. In terms of assembly, component of the mitochondrial core iron-sulfur cluster (ISC) complex composed of NFS1, LYRM4, NDUFAB1, ISCU, FXN, and FDX2; this complex is a heterohexamer containing two copies of each monomer. Homodimer. Monomer (probable predominant form). Oligomer. Monomers and polymeric aggregates of &gt;1 MDa have been isolated from mitochondria. A small fraction of heterologous overexpressed recombinant frataxin forms high-molecular weight aggregates that incorporate iron. Interacts with LYRM4. Interacts (via ferrous form) with ISCU; the interaction is possible when both are bound to the dimeric form of the cysteine desulfurase complex (NFS1:LYRM4) and the interaction enhances FXN interaction to the dimeric form of the cysteine desulfurase complex (NFS1:LYRM4). Interacts with FECH; one iron-bound FXN monomer seems to interact with a FECH homodimer. Interacts with SDHA and SDHB. Interacts with ACO2; the interaction is dependent on citrate. Interacts with HSPA9. Component of a complex composed of FXN, NFS1, LYRM4 and ISCU. As to quaternary structure, interacts with ACO1. Interacts with ISCU (cytoplasmic form). Post-translationally, processed in two steps by mitochondrial processing peptidase (MPP). MPP first cleaves the precursor to intermediate form and subsequently converts the intermediate to yield frataxin mature form (frataxin(81-210)) which is the predominant form. The additional forms, frataxin(56-210) and frataxin(78-210), seem to be produced when the normal maturation process is impaired; their physiological relevance is unsure. Heart, liver, skeletal muscle, kidney, spleen and thymus. Weakly expressed in the brain and lung.

Its subcellular location is the mitochondrion. The protein localises to the cytoplasm. The protein resides in the cytosol. The catalysed reaction is 4 Fe(2+) + O2 + 4 H(+) = 4 Fe(3+) + 2 H2O. Functionally, functions as an activator of persulfide transfer to the scaffoding protein ISCU as component of the core iron-sulfur cluster (ISC) assembly complex and participates to the [2Fe-2S] cluster assembly. Accelerates sulfur transfer from NFS1 persulfide intermediate to ISCU and to small thiols such as L-cysteine and glutathione leading to persulfuration of these thiols and ultimately sulfide release. Binds ferrous ion and is released from FXN upon the addition of both L-cysteine and reduced FDX2 during [2Fe-2S] cluster assembly. The core iron-sulfur cluster (ISC) assembly complex is involved in the de novo synthesis of a [2Fe-2S] cluster, the first step of the mitochondrial iron-sulfur protein biogenesis. This process is initiated by the cysteine desulfurase complex (NFS1:LYRM4:NDUFAB1) that produces persulfide which is delivered on the scaffold protein ISCU in a FXN-dependent manner. Then this complex is stabilized by FDX2 which provides reducing equivalents to accomplish the [2Fe-2S] cluster assembly. Finally, the [2Fe-2S] cluster is transferred from ISCU to chaperone proteins, including HSCB, HSPA9 and GLRX5. May play a role in the protection against iron-catalyzed oxidative stress through its ability to catalyze the oxidation of Fe(2+) to Fe(3+); the oligomeric form but not the monomeric form has in vitro ferroxidase activity. May be able to store large amounts of iron in the form of a ferrihydrite mineral by oligomerization; however, the physiological relevance is unsure as reports are conflicting and the function has only been shown using heterologous overexpression systems. May function as an iron chaperone protein that protects the aconitase [4Fe-4S]2+ cluster from disassembly and promotes enzyme reactivation. May play a role as a high affinity iron binding partner for FECH that is capable of both delivering iron to ferrochelatase and mediating the terminal step in mitochondrial heme biosynthesis. In terms of biological role, modulates the RNA-binding activity of ACO1. May be involved in the cytoplasmic iron-sulfur protein biogenesis. May contribute to oxidative stress resistance and overall cell survival. This Mus musculus (Mouse) protein is Frataxin, mitochondrial.